We begin with the raw amino-acid sequence, 1504 residues long: Nischarin (1504 aa).

An N-acetylalanine modification is found at alanine 2. Residues 2 to 133 (ATARTFGPER…GITAALAEEL (132 aa)) are necessary for binding to phosphoinositide-3-P; not sufficient for targeting to endosomes. The PX domain occupies 11–121 (REAEPAKEAR…AHFLHFHFYE (111 aa)). Residues 120–695 (YEINGITAAL…ERLALEWALG (576 aa)) are necessary for homooligomerization and targeting to endosomes. The interval 245–869 (LSVRFSATSM…LVYSDKRMVQ (625 aa)) is interaction with PAK1. 6 LRR repeats span residues 288 to 309 (ALTT…VKLI), 311 to 332 (KIEF…QHLY), 333 to 354 (NLVH…HTKL), 356 to 377 (NIKT…HKLY), 378 to 399 (SLVN…RSIG), and 403 to 424 (CLEH…RTKV). Residues 463-478 (KSKLSNPEKKGGEDSR) are compositionally biased toward basic and acidic residues. Disordered stretches follow at residues 463 to 501 (KSKL…SASL), 524 to 547 (SSTD…LESI), 554 to 573 (SDDL…EHAE), and 628 to 687 (REEG…EEER). Phosphoserine occurs at positions 541, 543, and 546. Residues 634 to 695 (EQGEEEDEEE…ERLALEWALG (62 aa)) are a coiled coil. Composition is skewed to acidic residues over residues 635–649 (QGEE…EEDV) and 661–685 (DVEE…EAEE). The tract at residues 660 to 869 (PDVEEEEGGG…LVYSDKRMVQ (210 aa)) is interaction with LIMK. An interaction with ITGA5 region spans residues 709-807 (KVLWCFLIHV…ANLHEFHADL (99 aa)). Positions 1016–1104 (TPGTGGSPQG…PAPPPAEAPA (89 aa)) are disordered. Position 1022 is a phosphoserine (serine 1022). The segment covering 1032–1043 (PAERRASNDQRP) has biased composition (basic and acidic residues). Over residues 1063–1078 (PAAASASGPAKTPAPA) the composition is skewed to low complexity. Threonine 1282 is modified (phosphothreonine). A Phosphoserine modification is found at serine 1284.

Homooligomer. Interacts with GRB2. Interacts with PIK3R1; probably associates with the PI3-kinase complex. Interacts with IRS4. Found in a complex with ITGA5 and PAK1. Found in a complex with LIMK1 and PAK1. Interacts with ITGA5 (via cytoplasmic domain); this interaction is direct. Interacts with PAK1 (via kinase domain); this interaction is direct and is increased upon activation of PAK1. Interacts with LIMK1 (via PDZ and kinase domain); this interaction is direct. Interacts with LIMK2; this interaction depends on LIMK2 activity. Interacts with RAC1 (activated state). Interacts with STK11; this interaction may increase STK11 activity. In terms of tissue distribution, isoform 1, isoform 3 and isoform 4 are expressed in brain. Isoform 1 is expressed in endocrine tissues.

The protein localises to the cell membrane. It is found in the cytoplasm. Its subcellular location is the early endosome. The protein resides in the recycling endosome. Functionally, acts either as the functional imidazoline-1 receptor (I1R) candidate or as a membrane-associated mediator of the I1R signaling. Binds numerous imidazoline ligands that induces initiation of cell-signaling cascades triggering to cell survival, growth and migration. Its activation by the agonist rilmenidine induces an increase in phosphorylation of mitogen-activated protein kinases MAPK1 and MAPK3 in rostral ventrolateral medulla (RVLM) neurons that exhibited rilmenidine-evoked hypotension. Blocking its activation with efaroxan abolished rilmenidine-induced mitogen-activated protein kinase phosphorylation in RVLM neurons. Acts as a modulator of Rac-regulated signal transduction pathways. Suppresses Rac1-stimulated cell migration by interacting with PAK1 and inhibiting its kinase activity. Also blocks Pak-independent Rac signaling by interacting with RAC1 and inhibiting Rac1-stimulated NF-kB response element and cyclin D1 promoter activation. Also inhibits LIMK1 kinase activity by reducing LIMK1 'Tyr-508' phosphorylation. Inhibits Rac-induced cell migration and invasion in breast and colon epithelial cells. Inhibits lamellipodia formation, when overexpressed. Plays a role in protection against apoptosis. Involved in association with IRS4 in the enhancement of insulin activation of MAPK1 and MAPK3. When overexpressed, induces a redistribution of cell surface ITGA5 integrin to intracellular endosomal structures. The sequence is that of Nischarin (NISCH) from Homo sapiens (Human).